The following is a 232-amino-acid chain: Anti-sigma-K factor RskA (232 aa).

Residues 1–90 (MTEHTDFELL…EVRRQSRWRT (90 aa)) are Cytoplasmic-facing. Residues 91-111 (AAFASAAAIAVGLGAFGLGVL) traverse the membrane as a helical segment. Residues 112–232 (TRPSPPPTVA…GTILAELPLG (121 aa)) are Extracellular-facing.

The protein belongs to the anti-sigma-K factor family.

It localises to the cell membrane. An anti-sigma factor for extracytoplasmic function (ECF) sigma factor SigK. ECF sigma factors are held in an inactive form by an anti-sigma factor until released by regulated intramembrane proteolysis (RIP). RIP occurs when an extracytoplasmic signal triggers a concerted proteolytic cascade to transmit information and elicit cellular responses. The membrane-spanning regulatory substrate protein is first cut extracytoplasmically (site-1 protease, S1P), then within the membrane itself (site-2 protease, S2P, Rip1), while cytoplasmic proteases finish degrading the regulatory protein, liberating the sigma factor. The chain is Anti-sigma-K factor RskA (rskA) from Mycobacterium tuberculosis (strain ATCC 25177 / H37Ra).